The following is a 776-amino-acid chain: GATOR2 complex protein Wdr24 (776 aa).

6 WD repeats span residues 63–103, 109–149, 152–192, 196–235, 238–280, and 284–326; these read NLSY…RQKQ, EHER…SINT, CNSE…KCMV, AHYGPVYTCDWHPTRNWLATGSRDKQIKVWNMDGRPGLEH, HTIA…IPFA, and EHTN…ALKA. Positions 466-490 are disordered; it reads HRSSFSNQKNPMNSRRATQVASDWP. A compositionally biased stretch (polar residues) spans 469 to 490; sequence SFSNQKNPMNSRRATQVASDWP. The C4-type zinc finger occupies 703–726; the sequence is NCGECGRPMGGKVGWYCDKCKSMQ. 15 residues coordinate Zn(2+): cysteine 704, cysteine 707, cysteine 719, cysteine 722, cysteine 730, cysteine 733, cysteine 744, cysteine 747, histidine 749, histidine 752, histidine 755, cysteine 766, cysteine 769, histidine 771, and cysteine 773. The RING-type; atypical zinc-finger motif lies at 728–776; it reads AKCCVCGLIVRGVYAWCQGCSHGGHIEHLQKYFAKHSKCPKCGHLCAYS.

It belongs to the WD repeat WDR24 family. Component of the GATOR complex consisting of mio, Nup44A/Seh1, Im11, Nplr3, Nplr2, Wdr24, Wdr59 and Sec13. Within the GATOR complex, probable component of the GATOR2 subcomplex which is likely composed of mio, Nup44A/Seh1, Wdr24, Wdr59 and Sec13. Interacts with Nup44A/Seh1. Interacts with mio. Interacts with Nplr3. The GATOR2 complex associates with unmet in the absence of S-adenosyl-L-methionine; the mio-Wdr24-Nup44A subcomplex is essential and sufficient for this interaction while Wdr59 and Sec13 are dispensable. This association acts as a nutrient sensor to inhibit mTORC1 signaling in the absence of methionine.

The protein resides in the lysosome. It localises to the cytoplasmic vesicle. The protein localises to the autophagosome. It catalyses the reaction S-ubiquitinyl-[E2 ubiquitin-conjugating enzyme]-L-cysteine + [acceptor protein]-L-lysine = [E2 ubiquitin-conjugating enzyme]-L-cysteine + N(6)-ubiquitinyl-[acceptor protein]-L-lysine.. Its pathway is protein modification; protein ubiquitination. Functionally, an essential component of the GATOR subcomplex GATOR2 which functions as an activator of the amino acid-sensing branch of the mTORC1 signaling pathway. The two GATOR subcomplexes, GATOR1 and GATOR2, regulate the mTORC1 pathway in order to mediate metabolic homeostasis, female gametogenesis and the response to amino acid limitation and complete starvation. GATOR2 activates the mTORC1 signaling pathway through the inhibition of the GATOR1 subcomplex, controlling the switch to cell proliferation and growth under nutrient replete conditions and during female oocyte development. GATOR2 probably acts as an E3 ubiquitin-protein ligase toward GATOR1. In the presence of abundant amino acids, the GATOR2 complex mediates ubiquitination of components of the GATOR1 complex, leading to GATOR1 inactivation. This GATOR2 component is required for activating mTORC1 and promoting cell growth in both germline and somatic cells. In addition to its role in regulation of the mTORC1 complex, functions independently of mTORC1 to promote the acidification of lysosomes and facilitates autophagic flux. This Drosophila melanogaster (Fruit fly) protein is GATOR2 complex protein Wdr24.